We begin with the raw amino-acid sequence, 250 residues long: NADH-quinone oxidoreductase subunit C (250 aa).

It belongs to the complex I 30 kDa subunit family. In terms of assembly, NDH-1 is composed of 14 different subunits. Subunits NuoB, C, D, E, F, and G constitute the peripheral sector of the complex.

It is found in the cell inner membrane. The enzyme catalyses a quinone + NADH + 5 H(+)(in) = a quinol + NAD(+) + 4 H(+)(out). Functionally, NDH-1 shuttles electrons from NADH, via FMN and iron-sulfur (Fe-S) centers, to quinones in the respiratory chain. The immediate electron acceptor for the enzyme in this species is believed to be ubiquinone. Couples the redox reaction to proton translocation (for every two electrons transferred, four hydrogen ions are translocated across the cytoplasmic membrane), and thus conserves the redox energy in a proton gradient. In Xanthomonas campestris pv. campestris (strain 8004), this protein is NADH-quinone oxidoreductase subunit C.